A 98-amino-acid polypeptide reads, in one-letter code: Large ribosomal subunit protein uL23c (98 aa).

It belongs to the universal ribosomal protein uL23 family. In terms of assembly, part of the 50S ribosomal subunit.

It localises to the plastid. In terms of biological role, binds to 23S rRNA. The sequence is that of Large ribosomal subunit protein uL23c (rpl23) from Euglena longa (Euglenophycean alga).